The sequence spans 88 residues: UPF0298 protein Bcer98_2635 (88 aa).

Belongs to the UPF0298 family.

The protein resides in the cytoplasm. The sequence is that of UPF0298 protein Bcer98_2635 from Bacillus cytotoxicus (strain DSM 22905 / CIP 110041 / 391-98 / NVH 391-98).